We begin with the raw amino-acid sequence, 60 residues long: UI (60 aa).

The segment covering 1–14 (AAAAGDSAASDLLG) has biased composition (low complexity). Residues 1 to 22 (AAAAGDSAASDLLGDNILRSED) are disordered. The residue at position 60 (Val60) is a Valine amide.

This sequence belongs to the sauvagine/corticotropin-releasing factor/urotensin I family.

Its subcellular location is the secreted. Its function is as follows. Urotensin is found in the teleost caudal neurosecretory system. It has a suggested role in osmoregulation and as a corticotropin-releasing factor. The non-hormonal portion of this precursor may be a urotensin binding protein, urophysin. The polypeptide is UI (Platichthys flesus (European flounder)).